Reading from the N-terminus, the 68-residue chain is Large ribosomal subunit protein uL29c (68 aa).

The protein belongs to the universal ribosomal protein uL29 family.

It is found in the plastid. The protein localises to the chloroplast. This chain is Large ribosomal subunit protein uL29c, found in Pyropia yezoensis (Susabi-nori).